A 50-amino-acid chain; its full sequence is ILKKDNYSYISFYNALIHEGYKDLAALLHSGIPVISSSNGGKDSVGGITS.

The CARD domain maps to 1–31 (ILKKDNYSYISFYNALIHEGYKDLAALLHSG). Residues 46–50 (GGITS) form the NB-ARC domain.

As to quaternary structure, monomer. Oligomerizes to a heptameric ring, known as the apoptosome, upon binding of cytochrome c and dATP. Oligomeric Apaf-1 and pro-caspase-9 bind to each other via their respective NH2-terminal CARD domains and consecutively mature caspase-9 is released from the complex. Interacts with APIP. Interacts (via CARD and NACHT domains) with NAIP/BIRC1 (via NACHT domain). Interacts with CIAO2A.

Oligomeric Apaf-1 mediates the cytochrome c-dependent autocatalytic activation of pro-caspase 9 (Apaf-3), leading to the activation of caspase-3 and apoptosis. This activation requires ATP. In Canis lupus familiaris (Dog), this protein is Apoptotic protease-activating factor 1 (APAF1).